Reading from the N-terminus, the 420-residue chain is Transcriptional adapter 2-beta (420 aa).

The segment at 4–59 (LGKKYCVYCLAEVSPLRFRCTECQDIELCPECFSAGAEIGHHRRYHGYQLVDGGRF) adopts a ZZ-type zinc-finger fold. Residues cysteine 9, cysteine 12, cysteine 23, cysteine 26, cysteine 32, cysteine 35, histidine 45, and histidine 49 each contribute to the Zn(2+) site. An SANT domain is found at 65–118 (EAEGGWTSREEQLLLDAIEQFGFGNWEDMAAHVGASRTPQEVMEHYVSMYIHGN). The interval 305–335 (SAEYEAARHKREKRKENKNLAGSKRGKEDGK) is disordered.

As to quaternary structure, interacts with GCN5L2, SMARCA4, SMARCE1 and PAX5. Component of the TFTC-HAT complex.

It is found in the nucleus. In terms of biological role, coactivates PAX5-dependent transcription together with either SMARCA4 or GCN5L2. The sequence is that of Transcriptional adapter 2-beta (TADA2B) from Homo sapiens (Human).